We begin with the raw amino-acid sequence, 169 residues long: Peptide deformylase (169 aa).

Fe cation is bound by residues cysteine 91 and histidine 133. Glutamate 134 is a catalytic residue. Position 137 (histidine 137) interacts with Fe cation.

It belongs to the polypeptide deformylase family. The cofactor is Fe(2+).

The catalysed reaction is N-terminal N-formyl-L-methionyl-[peptide] + H2O = N-terminal L-methionyl-[peptide] + formate. Functionally, removes the formyl group from the N-terminal Met of newly synthesized proteins. Requires at least a dipeptide for an efficient rate of reaction. N-terminal L-methionine is a prerequisite for activity but the enzyme has broad specificity at other positions. The sequence is that of Peptide deformylase from Shigella boydii serotype 18 (strain CDC 3083-94 / BS512).